Reading from the N-terminus, the 144-residue chain is Trypsin inhibitor STI2 (144 aa).

Residues Met-1 to Pro-34 form the signal peptide. Cystine bridges form between Cys-66–Cys-81 and Cys-102–Cys-132.

The protein belongs to the protease inhibitor I16 (SSI) family. As to quaternary structure, homodimer.

The protein localises to the secreted. In terms of biological role, inhibitory activity against trypsin. The protein is Trypsin inhibitor STI2 (sti2) of Streptomyces longisporus.